Reading from the N-terminus, the 244-residue chain is Claudin-12 (244 aa).

Residues 1–10 (MGCRDVHAAT) lie on the Cytoplasmic side of the membrane. The helical transmembrane segment at 11-31 (VLSFLCGIASVAGLFAGTLLP) threads the bilayer. Over 32-87 (NWRKLRLITFNRNEKNLTVYTGLWVKCARYDGSSDCLMYDTTWYSSVDQLDLRVLQ) the chain is Extracellular. A helical membrane pass occupies residues 88 to 108 (FALPLSMLIAMGALLLCLIGM). The Cytoplasmic portion of the chain corresponds to 109 to 135 (CNTAFRSSVPNIKLAKCLVNSAGCHLV). Residues 136–156 (AGLLFFLAGTVSLSPSIWVIF) form a helical membrane-spanning segment. The Extracellular segment spans residues 157–174 (YNIHLNKKFEPVFSFDYA). A helical transmembrane segment spans residues 175–195 (VYVTIASAGGLFMTSLILFIW). Residues 196 to 244 (YCTCKSLPSPFWQPLYSHPPSMHTYSQPYSARSRLSAIEIDIPVVSHTT) are Cytoplasmic-facing. Ser-228 and Ser-231 each carry phosphoserine.

It belongs to the claudin family. Interacts with OCLN.

It is found in the cell junction. Its subcellular location is the tight junction. It localises to the cell membrane. Plays a major role in tight junction-specific obliteration of the intercellular space, through calcium-independent cell-adhesion activity. The protein is Claudin-12 (CLDN12) of Pongo abelii (Sumatran orangutan).